Reading from the N-terminus, the 130-residue chain is Small ribosomal subunit protein uS8 (130 aa).

It belongs to the universal ribosomal protein uS8 family. In terms of assembly, part of the 30S ribosomal subunit. Contacts proteins S5 and S12.

In terms of biological role, one of the primary rRNA binding proteins, it binds directly to 16S rRNA central domain where it helps coordinate assembly of the platform of the 30S subunit. The polypeptide is Small ribosomal subunit protein uS8 (Cronobacter sakazakii (strain ATCC BAA-894) (Enterobacter sakazakii)).